The primary structure comprises 432 residues: Phosphomethylpyrimidine synthase (432 aa).

Substrate is bound by residues Asn-66, Met-95, Tyr-124, His-163, 185–187, 226–229, and Glu-265; these read SRG and DGMR. His-269 lines the Zn(2+) pocket. A substrate-binding site is contributed by Tyr-292. His-333 contributes to the Zn(2+) binding site. Residues Cys-409, Cys-412, and Cys-416 each coordinate [4Fe-4S] cluster.

This sequence belongs to the ThiC family. It depends on [4Fe-4S] cluster as a cofactor.

The enzyme catalyses 5-amino-1-(5-phospho-beta-D-ribosyl)imidazole + S-adenosyl-L-methionine = 4-amino-2-methyl-5-(phosphooxymethyl)pyrimidine + CO + 5'-deoxyadenosine + formate + L-methionine + 3 H(+). It functions in the pathway cofactor biosynthesis; thiamine diphosphate biosynthesis. In terms of biological role, catalyzes the synthesis of the hydroxymethylpyrimidine phosphate (HMP-P) moiety of thiamine from aminoimidazole ribotide (AIR) in a radical S-adenosyl-L-methionine (SAM)-dependent reaction. This chain is Phosphomethylpyrimidine synthase, found in Desulforudis audaxviator (strain MP104C).